Here is a 338-residue protein sequence, read N- to C-terminus: tRNA N6-adenosine threonylcarbamoyltransferase (338 aa).

Fe cation-binding residues include histidine 111 and histidine 115. Substrate is bound by residues 134–138 (LVSGG), aspartate 167, glycine 180, and asparagine 272. Residue aspartate 300 coordinates Fe cation.

The protein belongs to the KAE1 / TsaD family. Requires Fe(2+) as cofactor.

Its subcellular location is the cytoplasm. The enzyme catalyses L-threonylcarbamoyladenylate + adenosine(37) in tRNA = N(6)-L-threonylcarbamoyladenosine(37) in tRNA + AMP + H(+). Its function is as follows. Required for the formation of a threonylcarbamoyl group on adenosine at position 37 (t(6)A37) in tRNAs that read codons beginning with adenine. Is involved in the transfer of the threonylcarbamoyl moiety of threonylcarbamoyl-AMP (TC-AMP) to the N6 group of A37, together with TsaE and TsaB. TsaD likely plays a direct catalytic role in this reaction. This chain is tRNA N6-adenosine threonylcarbamoyltransferase, found in Aliivibrio fischeri (strain MJ11) (Vibrio fischeri).